We begin with the raw amino-acid sequence, 213 residues long: MENISIALPKGRMADSAITLFEKAGIAENILKDISRKLVVNDHKNLMKFMLVKPMDVPTYVEHGAADLGICGKDILLEQKKDCYEVLDLKFGFCKMVVAGPKEAKDSFLTNKRVATKFPNIAEEFFRQKGENVEIIKLNGSVELAPIVGLSEVIVDIVETGNTLRENGLIVIEEIFPSSARLIVNKASLKTKSQRIKEIIIKLKEVVETFKEV.

The protein belongs to the ATP phosphoribosyltransferase family. Short subfamily. Heteromultimer composed of HisG and HisZ subunits.

Its subcellular location is the cytoplasm. It catalyses the reaction 1-(5-phospho-beta-D-ribosyl)-ATP + diphosphate = 5-phospho-alpha-D-ribose 1-diphosphate + ATP. It participates in amino-acid biosynthesis; L-histidine biosynthesis; L-histidine from 5-phospho-alpha-D-ribose 1-diphosphate: step 1/9. Functionally, catalyzes the condensation of ATP and 5-phosphoribose 1-diphosphate to form N'-(5'-phosphoribosyl)-ATP (PR-ATP). Has a crucial role in the pathway because the rate of histidine biosynthesis seems to be controlled primarily by regulation of HisG enzymatic activity. In Thermoanaerobacter pseudethanolicus (strain ATCC 33223 / 39E) (Clostridium thermohydrosulfuricum), this protein is ATP phosphoribosyltransferase.